We begin with the raw amino-acid sequence, 612 residues long: Threonine--tRNA ligase (612 aa).

The catalytic stretch occupies residues 218-509; the sequence is DHRKLGVELG…LSEHFWGNFP (292 aa). Positions 310, 361, and 486 each coordinate Zn(2+).

Belongs to the class-II aminoacyl-tRNA synthetase family. As to quaternary structure, homodimer. Zn(2+) is required as a cofactor.

Its subcellular location is the cytoplasm. It carries out the reaction tRNA(Thr) + L-threonine + ATP = L-threonyl-tRNA(Thr) + AMP + diphosphate + H(+). Its function is as follows. Catalyzes the attachment of threonine to tRNA(Thr) in a two-step reaction: L-threonine is first activated by ATP to form Thr-AMP and then transferred to the acceptor end of tRNA(Thr). Also edits incorrectly charged L-seryl-tRNA(Thr). In Helicobacter acinonychis (strain Sheeba), this protein is Threonine--tRNA ligase.